Here is a 294-residue protein sequence, read N- to C-terminus: Protoheme IX farnesyltransferase (294 aa).

The next 9 helical transmembrane spans lie at 24 to 44 (VVLL…PGWV), 48 to 68 (LIAF…AINH), 96 to 116 (ALWF…LFVN), 118 to 138 (LTAL…TGYL), 146 to 166 (IVIG…AVTG), 172 to 192 (ALLL…ALAI), 224 to 244 (VLLL…WIYL), 245 to 265 (LGAL…YFTD), and 268 to 288 (VVAM…FVFL).

It belongs to the UbiA prenyltransferase family. Protoheme IX farnesyltransferase subfamily.

It is found in the cell inner membrane. The enzyme catalyses heme b + (2E,6E)-farnesyl diphosphate + H2O = Fe(II)-heme o + diphosphate. The protein operates within porphyrin-containing compound metabolism; heme O biosynthesis; heme O from protoheme: step 1/1. Converts heme B (protoheme IX) to heme O by substitution of the vinyl group on carbon 2 of heme B porphyrin ring with a hydroxyethyl farnesyl side group. This Legionella pneumophila (strain Paris) protein is Protoheme IX farnesyltransferase.